The chain runs to 631 residues: Serine/threonine-protein kinase PLK3 (631 aa).

Residues 1–59 (MEPAAGFLSPRPFPRAAVPSAPPAGPGPPANASPRSEPEVLAGPRAPDPPGRLITDPLS) are disordered. The span at 20–31 (SAPPAGPGPPAN) shows a compositional bias: pro residues. The Protein kinase domain occupies 63–315 (YTKGRLLGKG…IEQILRHDFF (253 aa)). ATP contacts are provided by residues 69–77 (LGKGGFARC) and K92. D186 functions as the Proton acceptor in the catalytic mechanism. POLO box domains lie at 448 to 526 (WVSK…YMEQ) and 547 to 630 (LLLQ…DQSP).

This sequence belongs to the protein kinase superfamily. Ser/Thr protein kinase family. CDC5/Polo subfamily. Interacts (via the POLO-box domain) with CIB1; leading to inhibit PLK3 kinase activity. Interacts with GOLGB1. Post-translationally, phosphorylated in an ATM-dependent manner following DNA damage. Phosphorylated as cells enter mitosis and dephosphorylated as cells exit mitosis. Expressed in skin.

The protein localises to the cytoplasm. The protein resides in the nucleus. It is found in the nucleolus. Its subcellular location is the golgi apparatus. It localises to the cytoskeleton. The protein localises to the microtubule organizing center. The protein resides in the centrosome. It catalyses the reaction L-seryl-[protein] + ATP = O-phospho-L-seryl-[protein] + ADP + H(+). The catalysed reaction is L-threonyl-[protein] + ATP = O-phospho-L-threonyl-[protein] + ADP + H(+). Its function is as follows. Serine/threonine-protein kinase involved in cell cycle regulation, response to stress and Golgi disassembly. Polo-like kinases act by binding and phosphorylating proteins that are already phosphorylated on a specific motif recognized by the POLO box domains. Phosphorylates ATF2, BCL2L1, CDC25A, CDC25C, CHEK2, HIF1A, JUN, p53/TP53, p73/TP73, PTEN, TOP2A and VRK1. Involved in cell cycle regulation: required for entry into S phase and cytokinesis. Phosphorylates BCL2L1, leading to regulate the G2 checkpoint and progression to cytokinesis during mitosis. Plays a key role in response to stress: rapidly activated upon stress stimulation, such as ionizing radiation, reactive oxygen species (ROS), hyperosmotic stress, UV irradiation and hypoxia. Involved in DNA damage response and G1/S transition checkpoint by phosphorylating CDC25A, p53/TP53 and p73/TP73. Phosphorylates p53/TP53 in response to reactive oxygen species (ROS), thereby promoting p53/TP53-mediated apoptosis. Phosphorylates CHEK2 in response to DNA damage, promoting the G2/M transition checkpoint. Phosphorylates the transcription factor p73/TP73 in response to DNA damage, leading to inhibit p73/TP73-mediated transcriptional activation and pro-apoptotic functions. Phosphorylates HIF1A and JUN is response to hypoxia. Phosphorylates ATF2 following hyperosmotic stress in corneal epithelium. Also involved in Golgi disassembly during the cell cycle: part of a MEK1/MAP2K1-dependent pathway that induces Golgi fragmentation during mitosis by mediating phosphorylation of VRK1. May participate in endomitotic cell cycle, a form of mitosis in which both karyokinesis and cytokinesis are interrupted and is a hallmark of megakaryocyte differentiation, via its interaction with CIB1. In Mus musculus (Mouse), this protein is Serine/threonine-protein kinase PLK3 (Plk3).